An 879-amino-acid polypeptide reads, in one-letter code: Leucine--tRNA ligase (879 aa).

The short motif at 46 to 56 (PYPSGALHMGH) is the 'HIGH' region element. The short motif at 638–642 (KMSKS) is the 'KMSKS' region element. Lys641 is a binding site for ATP.

It belongs to the class-I aminoacyl-tRNA synthetase family.

It localises to the cytoplasm. The enzyme catalyses tRNA(Leu) + L-leucine + ATP = L-leucyl-tRNA(Leu) + AMP + diphosphate. The chain is Leucine--tRNA ligase from Xanthomonas campestris pv. campestris (strain 8004).